The following is a 776-amino-acid chain: Isoamylase (776 aa).

An N-terminal signal peptide occupies residues 1-26; that stretch reads MKCPKILAALLGCAVLAGVPAMPAHA. Residues Asp-154, Glu-255, Thr-256, Asn-258, and Asp-285 each contribute to the Ca(2+) site. The Nucleophile role is filled by Asp-401. The cysteines at positions 410 and 422 are disulfide-linked. Glu-461 serves as the catalytic Proton donor. Intrachain disulfides connect Cys-546–Cys-616 and Cys-738–Cys-766.

It belongs to the glycosyl hydrolase 13 family. In terms of assembly, monomer. Requires Ca(2+) as cofactor.

The protein localises to the secreted. The enzyme catalyses Hydrolysis of (1-&gt;6)-alpha-D-glucosidic branch linkages in glycogen, amylopectin and their beta-limit dextrins.. This Pseudomonas amyloderamosa protein is Isoamylase (iam).